An 828-amino-acid polypeptide reads, in one-letter code: Class I hydrophobin hum3 (828 aa).

Residues Met1–Ala22 form the signal peptide. Residues Asn156, Asn222, and Asn738 are each glycosylated (N-linked (GlcNAc...) asparagine). 4 cysteine pairs are disulfide-bonded: Cys750–Cys808, Cys757–Cys802, Cys758–Cys788, and Cys809–Cys822. N-linked (GlcNAc...) asparagine glycosylation occurs at Asn811.

It in the C-terminal section; belongs to the fungal hydrophobin family. In terms of assembly, self-assembles to form functional amyloid fibrils called rodlets. Self-assembly into fibrillar rodlets occurs spontaneously at hydrophobic:hydrophilic interfaces and the rodlets further associate laterally to form amphipathic monolayers. In terms of processing, hum3 is an atypical hydrophobin that consists in a repetitive repellent-like region that spans 578 aa which is separated from a hydrophobin-like domain by a spacer region containing three possible kex2 processing sites. The repetitive region contains 17 amphipathic repeats of 31-36 aa each of them with a C-terminal putative kex2 processing motif.

The protein resides in the secreted. It localises to the cell wall. Aerial growth, conidiation, and dispersal of filamentous fungi in the environment rely upon a capability of their secreting small amphipathic proteins called hydrophobins (HPBs) with low sequence identity. Class I can self-assemble into an outermost layer of rodlet bundles on aerial cell surfaces, conferring cellular hydrophobicity that supports fungal growth, development and dispersal; whereas Class II form highly ordered films at water-air interfaces through intermolecular interactions but contribute nothing to the rodlet structure. Atypical class I hydrophobin that is preceded by a signal sequence and 17 imperfect repeats. The repeated peptides might function as repellents whereas the class I hydrophobin seems not to be crucial for the formation of aerial hyphae. Hydrophobins of Mycosarcoma maydis have been functionally replaced, at least partially, by repellents. Hum3 and rsp1 together are pathogenicity proteins that share an essential function in early stages of the infection. The chain is Class I hydrophobin hum3 from Mycosarcoma maydis (Corn smut fungus).